Consider the following 109-residue polypeptide: Protein reprimo (109 aa).

N-linked (GlcNAc...) asparagine glycosylation is found at N7 and N18. A helical membrane pass occupies residues 56 to 76 (VVQIAVMCVLSLTVVFGIFFL). S98 is subject to Phosphoserine.

This sequence belongs to the reprimo family.

It is found in the cytoplasm. Its subcellular location is the membrane. In terms of biological role, may be involved in the regulation of p53-dependent G2 arrest of the cell cycle. Seems to induce cell cycle arrest by inhibiting CDK1 activity and nuclear translocation of the CDC2 cyclin B1 complex. The chain is Protein reprimo (Rprm) from Rattus norvegicus (Rat).